The sequence spans 56 residues: MAKKSVRELIRLVSSEGTGHFYTTTKNKRNTPEKMEVKKFDPVARKHCIYKEAKIK.

The protein belongs to the bacterial ribosomal protein bL33 family.

The sequence is that of Large ribosomal subunit protein bL33 from Dichelobacter nodosus (strain VCS1703A).